We begin with the raw amino-acid sequence, 496 residues long: Glycerol kinase (496 aa).

Threonine 12 serves as a coordination point for ADP. ATP is bound by residues threonine 12, threonine 13, and serine 14. Threonine 12 contacts sn-glycerol 3-phosphate. Arginine 16 contacts ADP. Arginine 82, glutamate 83, and tyrosine 134 together coordinate sn-glycerol 3-phosphate. Arginine 82, glutamate 83, and tyrosine 134 together coordinate glycerol. Phosphohistidine; by HPr is present on histidine 230. Aspartate 244 serves as a coordination point for sn-glycerol 3-phosphate. Residues aspartate 244 and glutamine 245 each coordinate glycerol. Threonine 266 and glycine 309 together coordinate ADP. Residues threonine 266, glycine 309, glutamine 313, and glycine 410 each coordinate ATP. Residues glycine 410 and asparagine 414 each contribute to the ADP site.

Belongs to the FGGY kinase family. In terms of assembly, homotetramer and homodimer (in equilibrium). The phosphoenolpyruvate-dependent sugar phosphotransferase system (PTS), including enzyme I, and histidine-containing protein (HPr) are required for the phosphorylation, which leads to the activation of the enzyme.

The catalysed reaction is glycerol + ATP = sn-glycerol 3-phosphate + ADP + H(+). The protein operates within polyol metabolism; glycerol degradation via glycerol kinase pathway; sn-glycerol 3-phosphate from glycerol: step 1/1. With respect to regulation, activated by phosphorylation and inhibited by fructose 1,6-bisphosphate (FBP). In terms of biological role, key enzyme in the regulation of glycerol uptake and metabolism. Catalyzes the phosphorylation of glycerol to yield sn-glycerol 3-phosphate. The sequence is that of Glycerol kinase from Bacillus cereus (strain ATCC 14579 / DSM 31 / CCUG 7414 / JCM 2152 / NBRC 15305 / NCIMB 9373 / NCTC 2599 / NRRL B-3711).